The primary structure comprises 432 residues: MKKHNVFLLSLGCSKNTVDSERLMAQAEASGITFTEEADLADTILINTCGFIEDAKEESIAEILAAVEKKTQGIVSGVYVMGCLSELYRTEMREELPEIDGFFGTRELPALLQAIGAQYRDELYDHRSLLTPPHISYLKIAEGCNRSCSFCSIPKIRGRYRSQPMEQLLREAALLQKKGVRELNLIAQDTSIYGRDLYGTPMLRELLVRLSDMEFRWIRLLYAYPLDFPLEVITAMSERKNICNYLDLPLQHCNDRILRSMNRGITKTETVRLLDTIRAANPDIRLRTTMLVGFPGETRAEFDELMQFIETMRFDRLGCFPYCHEEHAPSYALEDTVKAEEKEERRAELMELQETIAKENNQLFEGKELTVLIDQIEGDIAIARTEYDAPEVDNECYLTTGSLRVGTGEFCTAHISESSAYELHGTITAVNG.

Residues 4 to 120 form the MTTase N-terminal domain; it reads HNVFLLSLGC…LLQAIGAQYR (117 aa). Residues C13, C49, C83, C144, C148, and C151 each coordinate [4Fe-4S] cluster. The 230-residue stretch at 130 to 359 folds into the Radical SAM core domain; that stretch reads LTPPHISYLK…MELQETIAKE (230 aa). Residues 362-429 enclose the TRAM domain; that stretch reads QLFEGKELTV…AYELHGTITA (68 aa).

This sequence belongs to the methylthiotransferase family. RimO subfamily. Requires [4Fe-4S] cluster as cofactor.

The protein resides in the cytoplasm. It carries out the reaction L-aspartate(89)-[ribosomal protein uS12]-hydrogen + (sulfur carrier)-SH + AH2 + 2 S-adenosyl-L-methionine = 3-methylsulfanyl-L-aspartate(89)-[ribosomal protein uS12]-hydrogen + (sulfur carrier)-H + 5'-deoxyadenosine + L-methionine + A + S-adenosyl-L-homocysteine + 2 H(+). Catalyzes the methylthiolation of an aspartic acid residue of ribosomal protein uS12. This is Ribosomal protein uS12 methylthiotransferase RimO from Chlorobium phaeobacteroides (strain DSM 266 / SMG 266 / 2430).